Consider the following 141-residue polypeptide: Large-conductance mechanosensitive channel (141 aa).

3 helical membrane passes run 14–34 (VMDL…VKSL), 38–58 (IIMP…YFLG), and 81–101 (GSFI…FLMV).

It belongs to the MscL family. As to quaternary structure, homopentamer.

It is found in the cell inner membrane. Its function is as follows. Channel that opens in response to stretch forces in the membrane lipid bilayer. May participate in the regulation of osmotic pressure changes within the cell. This Rhizobium rhizogenes (strain K84 / ATCC BAA-868) (Agrobacterium radiobacter) protein is Large-conductance mechanosensitive channel.